A 512-amino-acid chain; its full sequence is Bifunctional pantoate ligase/cytidylate kinase (512 aa).

The tract at residues 1-276 is pantoate--beta-alanine ligase; sequence MKLQTSADLQ…CGEARLIDHR (276 aa). ATP is bound at residue 27 to 34; that stretch reads MGALHQGH. Histidine 34 functions as the Proton donor in the catalytic mechanism. Residue glutamine 58 coordinates (R)-pantoate. Residue glutamine 58 participates in beta-alanine binding. ATP is bound at residue 147 to 150; it reads GEKD. Glutamine 153 provides a ligand contact to (R)-pantoate. Residues leucine 176 and 184–187 contribute to the ATP site; that span reads LSSR. Residues 277–512 are cytidylate kinase; it reads VLMSRLPILA…VPVEALNADA (236 aa).

This sequence in the N-terminal section; belongs to the pantothenate synthetase family. It in the C-terminal section; belongs to the cytidylate kinase family. Type 1 subfamily.

It localises to the cytoplasm. The catalysed reaction is (R)-pantoate + beta-alanine + ATP = (R)-pantothenate + AMP + diphosphate + H(+). It catalyses the reaction CMP + ATP = CDP + ADP. It carries out the reaction dCMP + ATP = dCDP + ADP. The protein operates within cofactor biosynthesis; (R)-pantothenate biosynthesis; (R)-pantothenate from (R)-pantoate and beta-alanine: step 1/1. In terms of biological role, catalyzes the condensation of pantoate with beta-alanine in an ATP-dependent reaction via a pantoyl-adenylate intermediate. Its function is as follows. Catalyzes the transfer of a phosphate group from ATP to either CMP or dCMP to form CDP or dCDP and ADP, respectively. This chain is Bifunctional pantoate ligase/cytidylate kinase, found in Synechococcus sp. (strain RCC307).